The chain runs to 385 residues: MKKNIAILGSTGSIGTQTLDIIHLNPDLFDVYLLTANNNVDLLIRQAREYRPEIVVIANDQKYHLIQEALADLPIKVWCGAEAIADAVTAPDIDMVVTAMVGYSGLLPTIKAIEARKMIALANKETLVVAGELIMRLAQDNQVPILPVDSEHSAIFQALLGERQRPEKILLTASGGPFLHLTAEELQHATREQALRHPNWNMGAKVTIDSASLMNKGFEMIEAKWLFEMQPDEIEILVHPQSIIHSMVQFRDGSVKAQLGIPDMRLPISYALGITHRIPNDYPRVDFTATPLTFERPDLERFPNLSYAFDAIRLGGNAPCALNAANEIAVTAFLRDEISFTDMSRLLYEVMEKHELFREVSLPTFIETDSNTRRVAESLLPKFRR.

NADPH is bound by residues T11, G12, S13, I14, N39, and N123. Residue K124 coordinates 1-deoxy-D-xylulose 5-phosphate. E125 lines the NADPH pocket. Mn(2+) is bound at residue D149. 1-deoxy-D-xylulose 5-phosphate contacts are provided by S150, E151, S174, and H197. E151 is a binding site for Mn(2+). G203 contributes to the NADPH binding site. Residues S210, N215, K216, and E219 each coordinate 1-deoxy-D-xylulose 5-phosphate. Residue E219 coordinates Mn(2+).

This sequence belongs to the DXR family. Mg(2+) is required as a cofactor. Mn(2+) serves as cofactor.

It carries out the reaction 2-C-methyl-D-erythritol 4-phosphate + NADP(+) = 1-deoxy-D-xylulose 5-phosphate + NADPH + H(+). The protein operates within isoprenoid biosynthesis; isopentenyl diphosphate biosynthesis via DXP pathway; isopentenyl diphosphate from 1-deoxy-D-xylulose 5-phosphate: step 1/6. Its function is as follows. Catalyzes the NADPH-dependent rearrangement and reduction of 1-deoxy-D-xylulose-5-phosphate (DXP) to 2-C-methyl-D-erythritol 4-phosphate (MEP). The polypeptide is 1-deoxy-D-xylulose 5-phosphate reductoisomerase (Porphyromonas gingivalis (strain ATCC 33277 / DSM 20709 / CIP 103683 / JCM 12257 / NCTC 11834 / 2561)).